Reading from the N-terminus, the 144-residue chain is Superoxide dismutase [Mn] (144 aa).

The disordered stretch occupies residues 1–22 (GYVNGLESAEETLAENRESGDF). Residues H42, D124, and H128 each contribute to the Mn(2+) site.

This sequence belongs to the iron/manganese superoxide dismutase family. Requires Mn(2+) as cofactor.

The catalysed reaction is 2 superoxide + 2 H(+) = H2O2 + O2. In terms of biological role, destroys superoxide anion radicals which are normally produced within the cells and which are toxic to biological systems. In Haloarcula hispanica, this protein is Superoxide dismutase [Mn] (sod).